The primary structure comprises 511 residues: Lysine--tRNA ligase (511 aa).

Residues E421 and E428 each coordinate Mg(2+).

Belongs to the class-II aminoacyl-tRNA synthetase family. As to quaternary structure, homodimer. Mg(2+) is required as a cofactor.

The protein localises to the cytoplasm. It catalyses the reaction tRNA(Lys) + L-lysine + ATP = L-lysyl-tRNA(Lys) + AMP + diphosphate. This Janthinobacterium sp. (strain Marseille) (Minibacterium massiliensis) protein is Lysine--tRNA ligase.